Consider the following 260-residue polypeptide: Global transcriptional regulator CodY (260 aa).

A GAF domain region spans residues 1–159; sequence MPNLLEKTRK…SSTVVGIQLL (159 aa). The segment at residues 207-226 is a DNA-binding region (H-T-H motif); the sequence is ASVIADRIGITRSVIVNALR.

The protein belongs to the CodY family.

The protein resides in the cytoplasm. In terms of biological role, DNA-binding global transcriptional regulator which is involved in the adaptive response to starvation and acts by directly or indirectly controlling the expression of numerous genes in response to nutrient availability. During rapid exponential growth, CodY is highly active and represses genes whose products allow adaptation to nutrient depletion. This is Global transcriptional regulator CodY from Streptococcus equi subsp. equi (strain 4047).